Consider the following 118-residue polypeptide: Large ribosomal subunit protein uL18 (118 aa).

This sequence belongs to the universal ribosomal protein uL18 family. In terms of assembly, part of the 50S ribosomal subunit; part of the 5S rRNA/L5/L18/L25 subcomplex. Contacts the 5S and 23S rRNAs.

In terms of biological role, this is one of the proteins that bind and probably mediate the attachment of the 5S RNA into the large ribosomal subunit, where it forms part of the central protuberance. The sequence is that of Large ribosomal subunit protein uL18 from Dechloromonas aromatica (strain RCB).